Consider the following 39-residue polypeptide: Potassium channel toxin alpha-KTx 31.1 (39 aa).

3 cysteine pairs are disulfide-bonded: Cys-7/Cys-30, Cys-13/Cys-35, and Cys-17/Cys-37.

Belongs to the short scorpion toxin superfamily. Potassium channel inhibitor family. Alpha-KTx 31 subfamily. As to expression, expressed by the venom gland.

The protein localises to the secreted. Functionally, voltage-gated potassium channel inhibitor. 1 uM of the native toxin inhibits rat Kv1.2/KCNA2 (100% inhibition), and drosophila Shaker IR/Sh (100%), human Kv1.3/KCNA3 (83%), rat Kv1.1/KCNA1 (32%) and rat Kv1.6/KCNA6 (21%). The sequence is that of Potassium channel toxin alpha-KTx 31.1 from Buthus occitanus tunetanus (Common European scorpion).